The sequence spans 72 residues: Translation initiation factor IF-1 (72 aa).

Residues 1 to 72 enclose the S1-like domain; that stretch reads MAKDDVIEIE…TKGRITYRFK (72 aa).

It belongs to the IF-1 family. As to quaternary structure, component of the 30S ribosomal translation pre-initiation complex which assembles on the 30S ribosome in the order IF-2 and IF-3, IF-1 and N-formylmethionyl-tRNA(fMet); mRNA recruitment can occur at any time during PIC assembly.

The protein resides in the cytoplasm. Functionally, one of the essential components for the initiation of protein synthesis. Stabilizes the binding of IF-2 and IF-3 on the 30S subunit to which N-formylmethionyl-tRNA(fMet) subsequently binds. Helps modulate mRNA selection, yielding the 30S pre-initiation complex (PIC). Upon addition of the 50S ribosomal subunit IF-1, IF-2 and IF-3 are released leaving the mature 70S translation initiation complex. This Ligilactobacillus salivarius (strain UCC118) (Lactobacillus salivarius) protein is Translation initiation factor IF-1.